We begin with the raw amino-acid sequence, 358 residues long: MEAPGLAQAAAAESDSRKVAEETPDGAPALCPSPEALSPEPPVYSLQDFDTLATVGTGTFGRVHLVKEKTAKHFFALKVMSIPDVIRLKQEQHVHNEKSVLKEVSHPFLIRLFWTWHDERFLYMLMEYVPGGELFSYLRNRGRFSSTTGLFYSAEIICAIEYLHSKEIVYRDLKPENILLDRDGHIKLTDFGFAKKLVDRTWTLCGTPEYLAPEVIQSKGHGRAVDWWALGILIFEMLSGFPPFFDDNPFGIYQKILAGKIDFPRHLDFHVKDLIKKLLVVDRTRRLGNMKNGANDVKHHRWFRSVDWEAVPQRKLKPPIVPKIAGDGDTSNFETYPENDWDTAAPVPQKDLEIFKNF.

Position 1 is an N-acetylmethionine (Met-1). Positions 1 to 34 (MEAPGLAQAAAAESDSRKVAEETPDGAPALCPSP) are disordered. The Protein kinase domain occupies 49–303 (FDTLATVGTG…ANDVKHHRWF (255 aa)). Residues 55 to 63 (VGTGTFGRV) and Lys-78 each bind ATP. Asp-172 serves as the catalytic Proton acceptor. A Phosphothreonine modification is found at Thr-203. An AGC-kinase C-terminal domain is found at 304–358 (RSVDWEAVPQRKLKPPIVPKIAGDGDTSNFETYPENDWDTAAPVPQKDLEIFKNF).

It belongs to the protein kinase superfamily. AGC Ser/Thr protein kinase family. cAMP subfamily. As to quaternary structure, like other cAMP-dependent protein kinases, the inactive holoenzyme is probably composed of 2 PRKX catalytic subunits and a dimer of regulatory subunits. Interacts (cAMP-dependent) specifically with the regulatory subunits PRKAR1A and PRKAR1B. Compared to other cAMP-dependent serine/threonine protein kinases, does not interact with the 2 other PKA regulatory subunits PRKAR2A and PRKAR2B. Interacts with cAMP-dependent protein kinase inhibitor/PKI proteins; inhibits PRKX. Interacts with GPKOW. Interacts with SMAD6. Interacts with PKD1; involved in differentiation and controlled morphogenesis of the kidney. Interacts with PIN1 (via WW domain). Post-translationally, phosphorylated; autophosphorylates in vitro. As to expression, widely expressed (at protein level). Specifically expressed in blood by macrophages and granulocytes according to PubMed:9860982.

It is found in the cytoplasm. It localises to the nucleus. The enzyme catalyses L-seryl-[protein] + ATP = O-phospho-L-seryl-[protein] + ADP + H(+). It catalyses the reaction L-threonyl-[protein] + ATP = O-phospho-L-threonyl-[protein] + ADP + H(+). With respect to regulation, binding of cAMP to the PRKAR1A or PRKAR1B regulatory subunits induces dissociation of the holoenzyme heterotetramer. The released monomeric PRKX is then active and able to phosphorylate its substrates. Its function is as follows. Serine/threonine protein kinase regulated by and mediating cAMP signaling in cells. Acts through phosphorylation of downstream targets that may include CREB, SMAD6 and PKD1 and has multiple functions in cellular differentiation and epithelial morphogenesis. Regulates myeloid cell differentiation through SMAD6 phosphorylation. Involved in nephrogenesis by stimulating renal epithelial cell migration and tubulogenesis. Also involved in angiogenesis through stimulation of endothelial cell proliferation, migration and vascular-like structure formation. This chain is cAMP-dependent protein kinase catalytic subunit PRKX (PRKX), found in Homo sapiens (Human).